Here is a 371-residue protein sequence, read N- to C-terminus: Maltose/maltodextrin import ATP-binding protein MalK (371 aa).

Residues 4-234 (VQLQNVTKAW…PADRFVAGFI (231 aa)) form the ABC transporter domain. 36–43 (GPSGCGKS) lines the ATP pocket.

Belongs to the ABC transporter superfamily. Maltooligosaccharide importer (TC 3.A.1.1.1) family. As to quaternary structure, the complex is composed of two ATP-binding proteins (MalK), two transmembrane proteins (MalG and MalK) and a solute-binding protein (MalE).

It localises to the cell inner membrane. It catalyses the reaction D-maltose(out) + ATP + H2O = D-maltose(in) + ADP + phosphate + H(+). Its function is as follows. Part of the ABC transporter complex MalEFGK involved in maltose/maltodextrin import. Responsible for energy coupling to the transport system. This is Maltose/maltodextrin import ATP-binding protein MalK from Escherichia coli O157:H7.